The chain runs to 104 residues: Large ribosomal subunit protein uL24 (104 aa).

It belongs to the universal ribosomal protein uL24 family. Part of the 50S ribosomal subunit.

In terms of biological role, one of two assembly initiator proteins, it binds directly to the 5'-end of the 23S rRNA, where it nucleates assembly of the 50S subunit. One of the proteins that surrounds the polypeptide exit tunnel on the outside of the subunit. This Pseudomonas fluorescens (strain ATCC BAA-477 / NRRL B-23932 / Pf-5) protein is Large ribosomal subunit protein uL24.